A 485-amino-acid chain; its full sequence is Glutamyl-tRNA(Gln) amidotransferase subunit A (485 aa).

Residues Lys-79 and Ser-154 each act as charge relay system in the active site. Ser-178 acts as the Acyl-ester intermediate in catalysis.

This sequence belongs to the amidase family. GatA subfamily. In terms of assembly, heterotrimer of A, B and C subunits.

It catalyses the reaction L-glutamyl-tRNA(Gln) + L-glutamine + ATP + H2O = L-glutaminyl-tRNA(Gln) + L-glutamate + ADP + phosphate + H(+). Its function is as follows. Allows the formation of correctly charged Gln-tRNA(Gln) through the transamidation of misacylated Glu-tRNA(Gln) in organisms which lack glutaminyl-tRNA synthetase. The reaction takes place in the presence of glutamine and ATP through an activated gamma-phospho-Glu-tRNA(Gln). This chain is Glutamyl-tRNA(Gln) amidotransferase subunit A, found in Staphylococcus haemolyticus (strain JCSC1435).